The chain runs to 155 residues: Endoribonuclease YbeY (155 aa).

Positions 114, 118, and 124 each coordinate Zn(2+).

This sequence belongs to the endoribonuclease YbeY family. Requires Zn(2+) as cofactor.

The protein resides in the cytoplasm. Its function is as follows. Single strand-specific metallo-endoribonuclease involved in late-stage 70S ribosome quality control and in maturation of the 3' terminus of the 16S rRNA. The polypeptide is Endoribonuclease YbeY (Baumannia cicadellinicola subsp. Homalodisca coagulata).